A 286-amino-acid polypeptide reads, in one-letter code: Apoptosis inhibitor 1 (286 aa).

2 BIR repeats span residues 29-96 (LIER…CAYA) and 131-199 (LQSR…CYFV). Zn(2+)-binding residues include Cys169, Cys172, His189, and Cys196. An RING-type zinc finger spans residues 238 to 274 (CKVCLERQRDAVLMPCRHFCVCVQCYFGLDQKCPTCR).

Its function is as follows. Acts by blocking cellular apoptosis early in infection. Later, stimulates caspase-3-like protease activity and induces apoptosis, probably to favor the release of occluded virions. The polypeptide is Apoptosis inhibitor 1 (IAP1) (Lepidoptera (butterflies and moths)).